A 135-amino-acid polypeptide reads, in one-letter code: Photosystem II extrinsic protein U (135 aa).

An N-terminal signal peptide occupies residues methionine 1–alanine 29.

Belongs to the PsbU family. PSII is composed of 1 copy each of membrane proteins PsbA, PsbB, PsbC, PsbD, PsbE, PsbF, PsbH, PsbI, PsbJ, PsbK, PsbL, PsbM, PsbT, PsbX, PsbY, PsbZ, Psb30/Ycf12, peripheral proteins PsbO, CyanoQ (PsbQ), PsbU, PsbV and a large number of cofactors. It forms dimeric complexes.

The protein resides in the cellular thylakoid membrane. Functionally, one of the extrinsic, lumenal subunits of photosystem II (PSII). PSII is a light-driven water plastoquinone oxidoreductase, using light energy to abstract electrons from H(2)O, generating a proton gradient subsequently used for ATP formation. The extrinsic proteins stabilize the structure of photosystem II oxygen-evolving complex (OEC), the ion environment of oxygen evolution and protect the OEC against heat-induced inactivation. This Synechococcus sp. (strain CC9605) protein is Photosystem II extrinsic protein U.